The chain runs to 596 residues: MFGIQENIPRGGTTMKEEPLGSGMNPVRSWMHTAGVVDANTAAQSGVGLARAHFEKQPPSNLRKSNFFHFVLALYDRQGQPVEIERTAFVDFVEKEKEPNNEKTNNGIHYKLQLLYSNGVRTEQDLYVRLIDSMTKQAIVYEGQDKNPEMCRVLLTHEIMCSRCCDKKSCGNRNETPSDPVIIDRFFLKFFLKCNQNCLKNAGNPRDMRRFQVVVSTTVNVDGHVLAVSDNMFVHNNSKHGRRARRLDPSEGTAPSYLENATPCIKAISPSEGWTTGGATVIIIGDNFFDGLQVVFGTMLVWSELITPHAIRVQTPPRHIPGVVEVTLSYKSKQFCKGAPGRFVYTALNEPTIDYGFQRLQKVIPRHPGDPERLPKEVLLKRAADLVEALYGMPHNNQEIILKRAADIAEALYSVPRNHNQIPTLGNNPAHTGMMGVNSFSSQLAVNVSETSQANDQVGYSRNTSSVSPRGYVPSSTPQQSNYNTVSTSMNGYGSGAMASLGVPGSPGFLNGSSANSPYGIVPSSPTMAASSVTLPSNCSSTHGIFSFSPANVISAVKQKSAFAPVVRPQASPPPSCTSANGNGLQAMSGLVVPPM.

A disordered region spans residues 1-22 (MFGIQENIPRGGTTMKEEPLGS). The segment at 63-66 (RKSN) is interaction with DNA. Residues 151–170 (CRVLLTHEIMCSRCCDKKSC) form a C5-type zinc finger. Interaction with DNA regions lie at residues 197–204 (NCLKNAGN) and 236–239 (NNSK). The IPT/TIG domain maps to 263–346 (PCIKAISPSE…KGAPGRFVYT (84 aa)). The tract at residues 451 to 483 (TSQANDQVGYSRNTSSVSPRGYVPSSTPQQSNY) is disordered.

The protein belongs to the COE family. In terms of assembly, forms either a homodimer or a heterodimer with a related family member. As to expression, expressed in brain.

The protein localises to the nucleus. Its function is as follows. Transcriptional activator. Recognizes variations of the palindromic sequence 5'-ATTCCCNNGGGAATT-3'. The polypeptide is Transcription factor COE3 (EBF3) (Homo sapiens (Human)).